The sequence spans 243 residues: Max-interacting protein 1 (243 aa).

Positions 76–128 constitute a bHLH domain; sequence HYRSTHNELEKNRRAHLRLCLERLKTLIPLGPECSRHTTLGLLNKAKAHIKKL. The segment at 164 to 235 is disordered; sequence EAERIRTDSM…TASDEGYSSC (72 aa). Residues 188–198 are compositionally biased toward acidic residues; sequence DQEEMEVDVES. Polar residues predominate over residues 222 to 235; sequence SLQSTASDEGYSSC.

As to quaternary structure, efficient DNA binding requires dimerization with another bHLH protein. Binds DNA as a heterodimer with MAX.

The protein resides in the nucleus. Transcriptional repressor. MXI1 binds with MAX to form a sequence-specific DNA-binding protein complex which recognizes the core sequence 5'-CAC[GA]TG-3'. MXI1 thus antagonizes MYC transcriptional activity by competing for MAX. In Danio rerio (Zebrafish), this protein is Max-interacting protein 1 (mxi1).